A 446-amino-acid polypeptide reads, in one-letter code: Glucarate dehydratase-related protein (446 aa).

Substrate-binding residues include His31, Thr104, Tyr149, and Lys204. Lys206 serves as the catalytic Proton acceptor. The Mg(2+) site is built by Asp234, Glu265, and Asn288. Position 234-236 (234-236) interacts with substrate; the sequence is DPN. Substrate-binding positions include Asn288, 338-340, His367, and Arg421; that span reads HSN. His338 functions as the Proton acceptor in the catalytic mechanism.

The protein belongs to the mandelate racemase/muconate lactonizing enzyme family. GlucD subfamily. Requires a divalent metal cation as cofactor.

In terms of biological role, does not seem to have an in-vivo activity on glucarate or idarate. Its real substrate is unknown. This is Glucarate dehydratase-related protein (gudX) from Escherichia coli (strain K12).